Reading from the N-terminus, the 78-residue chain is Acyl carrier protein (78 aa).

Positions 2–77 (SDTVERVKKI…DAVKFIDKAS (76 aa)) constitute a Carrier domain. Serine 37 bears the O-(pantetheine 4'-phosphoryl)serine mark.

Belongs to the acyl carrier protein (ACP) family. In terms of processing, 4'-phosphopantetheine is transferred from CoA to a specific serine of apo-ACP by AcpS. This modification is essential for activity because fatty acids are bound in thioester linkage to the sulfhydryl of the prosthetic group.

The protein localises to the cytoplasm. It functions in the pathway lipid metabolism; fatty acid biosynthesis. In terms of biological role, carrier of the growing fatty acid chain in fatty acid biosynthesis. The sequence is that of Acyl carrier protein from Bartonella henselae (strain ATCC 49882 / DSM 28221 / CCUG 30454 / Houston 1) (Rochalimaea henselae).